Here is a 1435-residue protein sequence, read N- to C-terminus: Protein clueless (1435 aa).

The tract at residues 1–97 (MALEMDSKNS…KPEGDGDADA (97 aa)) is disordered. Positions 18–35 (AAAATTKTNKAKENNNLA) are enriched in low complexity. The segment covering 38–50 (KKNQSQNLVNGNG) has biased composition (polar residues). Over residues 58 to 67 (TKKKGKKNRN) the composition is skewed to basic residues. Phosphoserine is present on Ser-266. Residues 420–662 (RAEDAFSSKL…RTFPPDVNFL (243 aa)) enclose the Clu domain. Basic and acidic residues-rich tracts occupy residues 719 to 731 (KKPE…EKKQ) and 752 to 762 (PNEKEKDTPVE). Disordered stretches follow at residues 719-762 (KKPE…TPVE) and 952-998 (VSND…SSSS). A compositionally biased stretch (basic residues) spans 959–975 (KKRGGNGGKHNKHKSSK). The span at 988–998 (NGGSTTSSSSS) shows a compositional bias: low complexity. TPR repeat units follow at residues 1096-1129 (AYNF…LNNV), 1222-1255 (ALID…NLKY), and 1257-1290 (GNKA…EKET). The interval 1407–1435 (EVLAPQDNNKEQAATAQQLTNGDKVAVSS) is disordered. A compositionally biased stretch (polar residues) spans 1417–1435 (EQAATAQQLTNGDKVAVSS).

The protein belongs to the CLU family.

The protein localises to the cytoplasm. Functionally, mRNA-binding protein involved in proper cytoplasmic distribution of mitochondria. In Drosophila persimilis (Fruit fly), this protein is Protein clueless.